The sequence spans 130 residues: Small ribosomal subunit protein uS9 (130 aa).

This sequence belongs to the universal ribosomal protein uS9 family.

This Pseudomonas putida (strain ATCC 700007 / DSM 6899 / JCM 31910 / BCRC 17059 / LMG 24140 / F1) protein is Small ribosomal subunit protein uS9.